We begin with the raw amino-acid sequence, 250 residues long: Low affinity immunoglobulin gamma Fc region receptor III-A (250 aa).

Positions 1–20 (MWRLLSPTALLLLVSAGTRA) are cleaved as a signal peptide. Residues 21 to 207 (ADLSKAMVVL…TSTFLPHWYQ (187 aa)) are Extracellular-facing. Ig-like C2-type domains are found at residues 32–105 (PEWN…LEVH) and 120–189 (EGDT…VNIT). Disulfide bonds link Cys-47/Cys-89 and Cys-128/Cys-172. N-linked (GlcNAc...) asparagine glycosylation is found at Asn-63, Asn-133, Asn-180, and Asn-187. The chain crosses the membrane as a helical span at residues 208–228 (IAFFLVTALLFVVDTGLHVAV). Residues 229-250 (QRDLQSSVKEWKDGKVTWSHGP) lie on the Cytoplasmic side of the membrane.

Forms a heterooligomeric complex with ITAM-containing signaling subunits FCER1G. Interacts (via transmembrane domain) with signaling subunits; this interaction is a prerequisite for receptor complex expression on the cell surface and intracellular signal transduction. Binds the Fc region of antigen-complexed IgG.

It is found in the cell membrane. Functionally, receptor for the invariable Fc fragment of immunoglobulin gamma (IgG). Optimally activated upon binding of clustered antigen-IgG complexes displayed on cell surfaces, triggers lysis of antibody-coated cells, a process known as antibody-dependent cellular cytotoxicity (ADCC). Does not bind free monomeric IgG, thus avoiding inappropriate effector cell activation in the absence of antigenic trigger. Mediates IgG effector functions on natural killer (NK) cells. Binds antigen-IgG complexes generated upon infection and triggers NK cell-dependent cytokine production and degranulation to limit viral load and propagation. Fc-binding subunit that associates with FCER1G adapter to form functional signaling complexes. Following the engagement of antigen-IgG complexes, triggers phosphorylation of immunoreceptor tyrosine-based activation motif (ITAM)-containing adapter with subsequent activation of phosphatidylinositol 3-kinase signaling and sustained elevation of intracellular calcium that ultimately drive NK cell activation. Mediates enhanced ADCC in response to afucosylated IgGs. In Felis catus (Cat), this protein is Low affinity immunoglobulin gamma Fc region receptor III-A.